The primary structure comprises 512 residues: Neuronal acetylcholine receptor subunit alpha-3 (512 aa).

An N-terminal signal peptide occupies residues 1–23; it reads MNSASRITLFFLLTVLITQECLS. Over 24-242 the chain is Extracellular; it reads SKGEDRLFRR…PLFYTINLII (219 aa). Asn-47 and Asn-164 each carry an N-linked (GlcNAc...) asparagine glycan. 2 disulfide bridges follow: Cys-151/Cys-165 and Cys-215/Cys-216. A helical membrane pass occupies residues 243-258; that stretch reads PCLLISFLTILVFYLP. Residues 259-260 lie on the Cytoplasmic side of the membrane; that stretch reads SD. A helical transmembrane segment spans residues 261 to 277; sequence CGEKVTLCISVLLSLTV. Glu-263 contacts Na(+). At 278–299 the chain is on the extracellular side; sequence FLLVITETIPSTSLVIPLIGEY. A helical membrane pass occupies residues 300 to 318; sequence LLFTMIFVTLSIVITVFVL. Topologically, residues 319 to 482 are cytoplasmic; that stretch reads NVHYRTPMTH…EDDWKYVAMV (164 aa). A disordered region spans residues 356-389; sequence ESSGKGGGEIAGSSGTGGGRGAEGKKMKSSASQQ. Gly residues predominate over residues 359 to 376; that stretch reads GKGGGEIAGSSGTGGGRG. Residues 483-501 traverse the membrane as a helical segment; the sequence is IDRIFLWVFVLVCVLGTLG. The Extracellular segment spans residues 502–512; it reads LFLQPLIGFFS.

The protein belongs to the ligand-gated ion channel (TC 1.A.9) family. Acetylcholine receptor (TC 1.A.9.1) subfamily. Alpha-3/CHRNA3 sub-subfamily. In terms of assembly, neuronal AChR is composed of two different types of subunits: alpha and beta. CHRNA3/Alpha-3 subunit can be combined to CHRNB2/beta-2 or CHRNB4/beta-4 to give rise to functional receptors. In terms of tissue distribution, expressed in retina and brain.

It localises to the synaptic cell membrane. The protein localises to the cell membrane. It is found in the endoplasmic reticulum. The protein resides in the golgi apparatus. It catalyses the reaction K(+)(in) = K(+)(out). It carries out the reaction Na(+)(in) = Na(+)(out). The enzyme catalyses Ca(2+)(in) = Ca(2+)(out). Activated by a myriad of ligands such as acetylcholine, cytisine, nicotine, choline and epibatidine. The heteropentamer CHRNA3:CHRNB2 activity is blocked by alpha-conotoxins ImI, ImII, PnIA, GID and MII. The heteropentamer CHRNA3:CHRNB4 activity is blocked by the alpha-conotoxin ImI and AuIB. Functionally, component of neuronal acetylcholine receptors (nAChRs) that function as pentameric, ligand-gated cation channels with high calcium permeability among other activities. nAChRs are excitatory neurotrasnmitter receptors formed by a collection of nAChR subunits known to mediate synaptic transmission in the nervous system and the neuromuscular junction. Each nAchR subunit confers differential attributes to channel properties, including activation, deactivation and desensitization kinetics, pH sensitivity, cation permeability, and binding to allosteric modulators. CHRNA3 forms heteropentameric neuronal acetylcholine receptors with CHRNB2 and CHRNB4. CHRNA3:CHRNB4 being predominant in neurons of the autonomic ganglia, it is known as ganglionic nicotinic receptor. CHRNA3:CHRNB4 also plays an important role in the habenulo-interpeduncular tract, modulating the mesolimbic dopamine system and affecting reward circuits and addiction. Hypothalamic CHRNA3:CHRNB4 nAChR activation by nicotine leads to activation of POMC neurons and a decrease in food intake. Also expressed in the urothelium where it modulates reflex bladder activity by increasing intracellular calcium through extracellular influx and basal ATP release. The sequence is that of Neuronal acetylcholine receptor subunit alpha-3 (chrna3) from Carassius auratus (Goldfish).